Consider the following 184-residue polypeptide: ATP synthase subunit b, chloroplastic (184 aa).

A helical transmembrane segment spans residues 27–49 (LATNLINLSVVLGVLIFFGKGVL).

The protein belongs to the ATPase B chain family. As to quaternary structure, F-type ATPases have 2 components, F(1) - the catalytic core - and F(0) - the membrane proton channel. F(1) has five subunits: alpha(3), beta(3), gamma(1), delta(1), epsilon(1). F(0) has four main subunits: a(1), b(1), b'(1) and c(10-14). The alpha and beta chains form an alternating ring which encloses part of the gamma chain. F(1) is attached to F(0) by a central stalk formed by the gamma and epsilon chains, while a peripheral stalk is formed by the delta, b and b' chains.

The protein resides in the plastid. It localises to the chloroplast thylakoid membrane. In terms of biological role, f(1)F(0) ATP synthase produces ATP from ADP in the presence of a proton or sodium gradient. F-type ATPases consist of two structural domains, F(1) containing the extramembraneous catalytic core and F(0) containing the membrane proton channel, linked together by a central stalk and a peripheral stalk. During catalysis, ATP synthesis in the catalytic domain of F(1) is coupled via a rotary mechanism of the central stalk subunits to proton translocation. Its function is as follows. Component of the F(0) channel, it forms part of the peripheral stalk, linking F(1) to F(0). The protein is ATP synthase subunit b, chloroplastic of Liriodendron tulipifera (Tuliptree).